A 411-amino-acid chain; its full sequence is ATPase GET3B (411 aa).

A chloroplast-targeting transit peptide spans 1–67 (MATLSSYLLS…RRRNSLQVKS (67 aa)). Residue 95-102 (KGGVGKTS) coordinates ATP. The active site involves D124. ATP is bound at residue N348.

It belongs to the arsA ATPase family.

The protein resides in the plastid. Its subcellular location is the chloroplast stroma. It catalyses the reaction ATP + H2O = ADP + phosphate + H(+). The chain is ATPase GET3B from Arabidopsis thaliana (Mouse-ear cress).